We begin with the raw amino-acid sequence, 488 residues long: DNA polymerase processivity factor (488 aa).

Disordered stretches follow at residues 1–26, 331–453, and 469–488; these read MTDSPGGVAPASPVEDASDASLGQPE, SPSA…RSGS, and PGAFSAFRGGPQTPYGFGFP. Residues 331 to 344 are compositionally biased toward low complexity; that stretch reads SPSAGSSASRASGS. Polar residues predominate over residues 345-355; it reads EPTDSQDSASD. Residues 368–379 are compositionally biased toward low complexity; that stretch reads AARAGEAGALHA. A compositionally biased stretch (polar residues) spans 383–393; it reads PSSTTRVTPTT. Residues 394–413 carry the Bipartite nuclear localization signal motif; that stretch reads KRGRSGGEDARADTALKKPK. The span at 398-409 shows a compositional bias: basic and acidic residues; the sequence is SGGEDARADTAL. Over residues 437–453 the composition is skewed to low complexity; that stretch reads ADGTAARPAAPDARSGS.

It belongs to the herpesviridae DNA polymerase processivity factor family. In terms of assembly, interacts with the DNA polymerase catalytic subunit UL30. Interacts with the origin-binding protein.

It is found in the host nucleus. Plays an essential role in viral DNA replication by acting as the polymerase accessory subunit. Associates with the viral polymerase to increase its processivity and forms high-affinity direct interactions with DNA. Facilitates the origin-binding protein UL9 loading onto DNA thus increasing its ability to assemble into a functional complex capable of unwinding duplex DNA. The polypeptide is DNA polymerase processivity factor (Homo sapiens (Human)).